Consider the following 171-residue polypeptide: Iron-sulfur cluster assembly protein 3 (171 aa).

The transit peptide at 1–49 (MLRQTTKRAFLGLASQNPTPFPVVSRLYHPNVIDHYDNPRNVGSFDKND) directs the protein to the mitochondrion.

This sequence belongs to the NifU family. In terms of assembly, component of the core Fe-S cluster (ISC) assembly machinery. [2Fe-2S] cluster serves as cofactor. Mostly expressed in flowers and pollen, and, to a lower extent, in leaves and roots.

It localises to the mitochondrion matrix. It functions in the pathway cofactor biosynthesis; iron-sulfur cluster biosynthesis. In terms of biological role, scaffold protein for the de novo synthesis of iron-sulfur (Fe-S) clusters within mitochondria, which is required for maturation of both mitochondrial and cytoplasmic [2Fe-2S] and [4Fe-4S] proteins. First, a [2Fe-2S] cluster is transiently assembled on the scaffold protein ISCU (ISU1, ISU2 or ISU3). In a second step, the cluster is released from ISCU, transferred to a glutaredoxin, followed by the formation of mitochondrial [2Fe-2S] proteins, the synthesis of [4Fe-4S] clusters and their target-specific insertion into the recipient apoproteins. Cluster assembly on ISCU depends on the function of the cysteine desulfurase complex NFS1-ISD11, which serves as the sulfur donor for cluster synthesis, the iron-binding protein frataxin as the putative iron donor, and the electron transfer chain comprised of ferredoxin reductase and ferredoxin, which receive their electrons from NADH. This Arabidopsis thaliana (Mouse-ear cress) protein is Iron-sulfur cluster assembly protein 3 (ISU3).